The sequence spans 281 residues: Imidazoleglycerol-phosphate dehydratase, chloroplastic (281 aa).

The N-terminal 85 residues, Met-1 to Arg-85, are a transit peptide targeting the chloroplast. Substrate contacts are provided by residues Glu-95, His-121–His-129, His-147–Glu-151, Arg-173, and Arg-195. Residues His-121, His-147, His-148, and Glu-151 each coordinate Mn(2+). Mn(2+) is bound by residues His-219, His-243, His-244, and Glu-247. Substrate is bound by residues His-243–Lys-251 and Ser-273–Lys-275.

It belongs to the imidazoleglycerol-phosphate dehydratase family. The cofactor is Mn(2+).

The protein resides in the plastid. It localises to the chloroplast. The enzyme catalyses D-erythro-1-(imidazol-4-yl)glycerol 3-phosphate = 3-(imidazol-4-yl)-2-oxopropyl phosphate + H2O. The protein operates within amino-acid biosynthesis; L-histidine biosynthesis; L-histidine from 5-phospho-alpha-D-ribose 1-diphosphate: step 6/9. The protein is Imidazoleglycerol-phosphate dehydratase, chloroplastic of Pisum sativum (Garden pea).